A 141-amino-acid chain; its full sequence is MAKRFFEAYNETPDGTQCHRKAYITTALGGLCGLISSAYSITHNPADSPLEAVARVGRFTFTAAAIGAMFGLTTCVSAQVREKPDDPLNYFIGGCAGGLTLGARTHSYGTAAIGCVYMGTAAALFKMGKLEGWELFATPKV.

Ala-2 carries the N-acetylalanine modification. 2 helical membrane-spanning segments follow: residues 21–43 (KAYI…SITH) and 58–80 (RFTF…SAQV).

The protein belongs to the complex I NDUFA11 subunit family. Complex I is composed of 45 different subunits.

Its subcellular location is the mitochondrion inner membrane. In terms of biological role, accessory subunit of the mitochondrial membrane respiratory chain NADH dehydrogenase (Complex I), that is believed not to be involved in catalysis. Complex I functions in the transfer of electrons from NADH to the respiratory chain. The immediate electron acceptor for the enzyme is believed to be ubiquinone. The chain is NADH dehydrogenase [ubiquinone] 1 alpha subcomplex subunit 11 (Ndufa11) from Rattus norvegicus (Rat).